Reading from the N-terminus, the 380-residue chain is Cytochrome b (380 aa).

Transmembrane regions (helical) follow at residues 34-54, 78-99, 114-134, and 179-199; these read FGSLLALCLVTQILTGLLLAM, WLIRNMHANGASFFFICIYMHI, WNTGVLLLLTLMATAFVGYVL, and FFALHFLLPFMIAGLTLIHLT. Heme b-binding residues include His84 and His98. Heme b-binding residues include His183 and His197. A ubiquinone is bound at residue His202. Helical transmembrane passes span 227-247, 289-309, 321-341, and 348-368; these read LKDILGLALLLLPLTAMALFS, LGGVLALAASVLVLLLCPFLH, LSQSLFWILVANLLILTWIGS, and FIIIGQLASTTYFIILLILFP.

This sequence belongs to the cytochrome b family. The cytochrome bc1 complex contains 11 subunits: 3 respiratory subunits (MT-CYB, CYC1 and UQCRFS1), 2 core proteins (UQCRC1 and UQCRC2) and 6 low-molecular weight proteins (UQCRH/QCR6, UQCRB/QCR7, UQCRQ/QCR8, UQCR10/QCR9, UQCR11/QCR10 and a cleavage product of UQCRFS1). This cytochrome bc1 complex then forms a dimer. Heme b is required as a cofactor.

The protein resides in the mitochondrion inner membrane. Component of the ubiquinol-cytochrome c reductase complex (complex III or cytochrome b-c1 complex) that is part of the mitochondrial respiratory chain. The b-c1 complex mediates electron transfer from ubiquinol to cytochrome c. Contributes to the generation of a proton gradient across the mitochondrial membrane that is then used for ATP synthesis. The chain is Cytochrome b (MT-CYB) from Oceanodroma tristrami (Tristram's storm-petrel).